A 186-amino-acid chain; its full sequence is Elongation factor P (186 aa).

It belongs to the elongation factor P family.

It is found in the cytoplasm. It participates in protein biosynthesis; polypeptide chain elongation. Its function is as follows. Involved in peptide bond synthesis. Stimulates efficient translation and peptide-bond synthesis on native or reconstituted 70S ribosomes in vitro. Probably functions indirectly by altering the affinity of the ribosome for aminoacyl-tRNA, thus increasing their reactivity as acceptors for peptidyl transferase. This chain is Elongation factor P, found in Polynucleobacter necessarius subsp. necessarius (strain STIR1).